The following is a 796-amino-acid chain: MMRLDFQRKLLSHTERVKAVDFHPTEPWVIASHYNGQVGIWNYNTQTLVRSFDINDVPIRACAFIARKNWFVCGSDDFQVRVYNYNTGEKVTQFEAHPDYIRALVVHPTQPFLLTSSDDMTIKCFNWDMSWKCVQTFEGHSRYVMSLAINPKDTNTFASSCLDGTVKVWSFGSSVANFTLQAHDRGVNYVNYYPAGDKPYLITAGDDNLIKVWDYQTKACVRILEGHTNNVSFAFFHSKFPIIISGSEDGTVKIWHTLSYSLIKSYNFSLDRAWCIAQNKDNGLVTVGFDNGLITFSLGRDEPSVTMDSSGKVVWSNYNEVMSAMIRPAKEQSDLTDGSLISLSVKELGTTELYPAVLKHSPNGRFVSVCGNGEYIVYTALAWRNKAYGKALDFAWSADSNVYGSRTSDRSIVIHKNFKESNRLDLSYSCDKIFGGFLLGVVGSDFICFYDWDTGILVRKIDVKPKGVYWNDDGRFVILACDDDFYLLGFNAEMFYSAVESGTADEEEGVADSFEALADVSESVVNGKWVAETFIYTTTAARLNYLIGDQTYKIANVESSFYLLGYIPRDDRIYLTDRDMNVVSYSFNLAIIEYQSLVLKGDLEAAQGLLEQISETDRPRLSDFLSRLGYKEAALELSGDSVQRFELALDAQRLDIASQIAQELDDPLKWRSLGDAALNAWDFVLAQECFEKGKDYGSLVLLYTATNNHEGLKELSQLTKSTKINNTAFICSWLTNQPAECVNILTSTQRYPEANLFAATYCPDEVKNVLPEWKVDLTKNQKERIADSLGDLELKN.

WD repeat units lie at residues 4–42 (LDFQRKLLSHTERVKAVDFHPTEPWVIASHYNGQVGIWN), 46–84 (QTLVRSFDINDVPIRACAFIARKNWFVCGSDDFQVRVYN), 88–126 (GEKVTQFEAHPDYIRALVVHPTQPFLLTSSDDMTIKCFN), 131–170 (WKCVQTFEGHSRYVMSLAINPKDTNTFASSCLDGTVKVWS), 172–214 (GSSV…KVWD), and 218–256 (KACVRILEGHTNNVSFAFFHSKFPIIISGSEDGTVKIWH).

The protein belongs to the WD repeat COPB2 family. In terms of assembly, oligomeric complex that consists of at least the alpha, beta, beta', gamma, delta, epsilon and zeta subunits.

The protein resides in the cytoplasm. Its subcellular location is the golgi apparatus membrane. It localises to the cytoplasmic vesicle. The protein localises to the COPI-coated vesicle membrane. In terms of biological role, the coatomer is a cytosolic protein complex that binds to dilysine motifs and reversibly associates with Golgi non-clathrin-coated vesicles, which further mediate biosynthetic protein transport from the ER, via the Golgi up to the trans Golgi network. Coatomer complex is required for budding from Golgi membranes, and is essential for the retrograde Golgi-to-ER transport of dilysine-tagged proteins. The chain is Probable coatomer subunit beta' (sec27) from Schizosaccharomyces pombe (strain 972 / ATCC 24843) (Fission yeast).